We begin with the raw amino-acid sequence, 209 residues long: MPQVAKYDTTGNRVGDIDLADNVFNEEVNEHVVHQVVTAQLATMRRGTASTKTRGEVSGGGRKPWRQKGTGRARHGSIRSPLWVGGGIVFGPRPRKHIKKVPKKVKKLALRSILSYKSQNEELIILDELKFDTPKTKQVVELLSNLNLEGKKVLIILPDKDANIYLSARNIPGVKTLVVDALNAFDLLNNDCIVMSEEAVKRVEEVLAR.

Residues 46-76 (RGTASTKTRGEVSGGGRKPWRQKGTGRARHG) are disordered. Positions 63-76 (KPWRQKGTGRARHG) are enriched in basic residues.

This sequence belongs to the universal ribosomal protein uL4 family. As to quaternary structure, part of the 50S ribosomal subunit.

Functionally, one of the primary rRNA binding proteins, this protein initially binds near the 5'-end of the 23S rRNA. It is important during the early stages of 50S assembly. It makes multiple contacts with different domains of the 23S rRNA in the assembled 50S subunit and ribosome. Its function is as follows. Forms part of the polypeptide exit tunnel. This Halothermothrix orenii (strain H 168 / OCM 544 / DSM 9562) protein is Large ribosomal subunit protein uL4.